The following is a 177-amino-acid chain: UPF0340 protein STH78 (177 aa).

Belongs to the UPF0340 family.

The sequence is that of UPF0340 protein STH78 from Symbiobacterium thermophilum (strain DSM 24528 / JCM 14929 / IAM 14863 / T).